Here is a 198-residue protein sequence, read N- to C-terminus: MEHYISLLVKSIFIENMALSFFLGMCTFLAVSKKVKTSFGLGVAVVVVLTLAVPLNNLVYTYLLKDGALVEGVDLSFLNFITFIGVIAALVQILEMVLDRFFPPLYNALGIFLPLITVNCAIFGGVSFMVQRDYNFTESIVYGFGSGVGWMLAIVALAGIREKMKYSDVPPGLRGLGITFITVGLMALGFMSFSGVQL.

Transmembrane regions (helical) follow at residues 11 to 31 (SIFI…FLAV), 39 to 59 (FGLG…NNLV), 77 to 97 (FLNF…LEMV), 110 to 130 (GIFL…SFMV), 140 to 160 (IVYG…LAGI), and 176 to 196 (LGIT…FSGV).

It belongs to the NqrDE/RnfAE family. In terms of assembly, composed of six subunits; NqrA, NqrB, NqrC, NqrD, NqrE and NqrF.

The protein resides in the cell inner membrane. It catalyses the reaction a ubiquinone + n Na(+)(in) + NADH + H(+) = a ubiquinol + n Na(+)(out) + NAD(+). In terms of biological role, NQR complex catalyzes the reduction of ubiquinone-1 to ubiquinol by two successive reactions, coupled with the transport of Na(+) ions from the cytoplasm to the periplasm. NqrA to NqrE are probably involved in the second step, the conversion of ubisemiquinone to ubiquinol. This chain is Na(+)-translocating NADH-quinone reductase subunit E, found in Aliivibrio salmonicida (strain LFI1238) (Vibrio salmonicida (strain LFI1238)).